Consider the following 113-residue polypeptide: Prostate and testis expressed protein 2 (113 aa).

Positions Met1 to Ala26 are cleaved as a signal peptide. Residues Ile29–Pro110 form the UPAR/Ly6 domain. 4 disulfides stabilise this stretch: Cys31/Cys57, Cys34/Cys42, Cys49/Cys80, and Cys84/Cys101.

The protein belongs to the PATE family. As to expression, isoform 1 and isoform 2 are expressed in prostate and testis. Isoform 2 is expressed in male and female brain at equivalent levels, in particular in cerebellum, cerebral cortex, corpus callosum, occipital, parrietal and temporal lobes, and pons, but not in amygdala, cerebral peduncle, hippocampus and thalamus.

It localises to the secreted. The chain is Prostate and testis expressed protein 2 (PATE2) from Homo sapiens (Human).